We begin with the raw amino-acid sequence, 484 residues long: Ureidoglycolate hydrolase (484 aa).

Positions 1–28 (MATSAAARFLAALAGAAVLLVLLGGAAG) are cleaved as a signal peptide. H148, D159, E194, and H262 together coordinate Mn(2+). Substrate stretches follow at residues 193 to 194 (EE) and 262 to 265 (HIEQ). The tract at residues 284-399 (APASIKVEFE…LSEFKIINQD (116 aa)) is involved in dimerization. Substrate contacts are provided by H298, N348, and R361. Positions 431-432 (YH) are substrate. Residue H456 coordinates Mn(2+). H456 provides a ligand contact to substrate.

Belongs to the peptidase M20 family. In terms of assembly, homodimer. Mn(2+) serves as cofactor. Ni(2+) is required as a cofactor. The cofactor is Co(2+).

The protein resides in the endoplasmic reticulum. The catalysed reaction is (S)-ureidoglycolate + H2O + 2 H(+) = glyoxylate + 2 NH4(+) + CO2. The protein operates within nitrogen metabolism; (S)-allantoin degradation; glyoxylate from (S)-ureidoglycolate: step 1/1. Its function is as follows. Involved in the catabolism of purine nucleotides. The sequential activity of AAH, UGLYAH and UAH allows a complete purine breakdown without the intermediate generation of urea. The sequence is that of Ureidoglycolate hydrolase from Oryza sativa subsp. japonica (Rice).